The primary structure comprises 78 residues: Translational regulator CsrA (78 aa).

The protein belongs to the CsrA/RsmA family. In terms of assembly, homodimer; the beta-strands of each monomer intercalate to form a hydrophobic core, while the alpha-helices form wings that extend away from the core.

It localises to the cytoplasm. In terms of biological role, a translational regulator that binds mRNA to regulate translation initiation and/or mRNA stability. Usually binds in the 5'-UTR at or near the Shine-Dalgarno sequence preventing ribosome-binding, thus repressing translation. Its main target seems to be the major flagellin gene, while its function is anatagonized by FliW. This is Translational regulator CsrA from Borrelia turicatae (strain 91E135).